The sequence spans 357 residues: Glycerol-1-phosphate dehydrogenase [NAD(P)+] (357 aa).

Residues 104–108 (GKTID) and 126–129 (TAAS) each bind NAD(+). Aspartate 131 contributes to the substrate binding site. NAD(+) is bound at residue serine 135. Position 178 (aspartate 178) interacts with substrate. The Zn(2+) site is built by aspartate 178 and histidine 258. Histidine 262 contacts substrate. Zn(2+) is bound at residue histidine 274.

The protein belongs to the glycerol-1-phosphate dehydrogenase family. It depends on Zn(2+) as a cofactor.

The protein localises to the cytoplasm. It carries out the reaction sn-glycerol 1-phosphate + NAD(+) = dihydroxyacetone phosphate + NADH + H(+). The catalysed reaction is sn-glycerol 1-phosphate + NADP(+) = dihydroxyacetone phosphate + NADPH + H(+). It functions in the pathway membrane lipid metabolism; glycerophospholipid metabolism. Catalyzes the NAD(P)H-dependent reduction of dihydroxyacetonephosphate (DHAP or glycerone phosphate) to glycerol 1-phosphate (G1P). The G1P thus generated is used as the glycerophosphate backbone of phospholipids in the cellular membranes of Archaea. The chain is Glycerol-1-phosphate dehydrogenase [NAD(P)+] from Methanococcoides burtonii (strain DSM 6242 / NBRC 107633 / OCM 468 / ACE-M).